The chain runs to 73 residues: Acyl carrier protein (73 aa).

The Carrier domain maps to 1–73 (MAVFEKVQDI…DLVKYVENNK (73 aa)). S35 is modified (O-(pantetheine 4'-phosphoryl)serine).

It belongs to the acyl carrier protein (ACP) family. 4'-phosphopantetheine is transferred from CoA to a specific serine of apo-ACP by AcpS. This modification is essential for activity because fatty acids are bound in thioester linkage to the sulfhydryl of the prosthetic group.

Its subcellular location is the cytoplasm. It participates in lipid metabolism; fatty acid biosynthesis. In terms of biological role, carrier of the growing fatty acid chain in fatty acid biosynthesis. This is Acyl carrier protein from Lactococcus lactis subsp. lactis (strain IL1403) (Streptococcus lactis).